We begin with the raw amino-acid sequence, 504 residues long: Anaerobic nitric oxide reductase transcription regulator NorR (504 aa).

Asp-57 is modified (4-aspartylphosphate). A Sigma-54 factor interaction domain is found at 187-416 (MIGLSPGMMQ…LEHAIHRAVV (230 aa)). Residues 215 to 222 (GETGTGKE) and 278 to 287 (ADNGTLFLDE) each bind ATP. Residues 479-498 (WAACARALEMDVANLHRLAK) constitute a DNA-binding region (H-T-H motif).

Its pathway is nitrogen metabolism; nitric oxide reduction. Its function is as follows. Required for the expression of anaerobic nitric oxide (NO) reductase, acts as a transcriptional activator for at least the norVW operon. Activation also requires sigma-54. The chain is Anaerobic nitric oxide reductase transcription regulator NorR from Enterobacter sp. (strain 638).